Reading from the N-terminus, the 1561-residue chain is MTPACPLLLSVILSLRLATAFDPAPSACSALASGVLYGAFSLQDLFPTIASGCSWTLENPDPTKYSLYLRFNRQEQVCTHFAPRLLPLDHYLVNFTCLRPGPEEATARAESEVGRPEEEEEEAAAAASGLELCGGSGPFTFLHFDKNFVQLCLSAEPSEAPRLLAPAALAFRFVEVLLINNNNSSQFTCGVLCRWSEECGRAAGRACGFAQPGCSCPGEAGANPATTTSPGPPVAHTLSNALVPGGPAPPAEADLHSGSSNDLFTTEMRYGEEPEEEPKVKTQWPRSADEPGLYMAQTGDPAAEEWSPWSVCSLTCGQGLQVRTRSCVSSPYGTLCSGPLRETRPCNNSATCPVHGVWEEWGSWSLCSRSCGRGSRSRMRTCVPPQHGGKACEGPELQTKLCSMAACPVEGQWLEWGPWGPCSSSCANGTQQRSRKCSVAGPAWATCAGALTDTRECSNLDCPATDGKWGPWNAWSLCSKTCDTGWQRRFRMCQASGTQGYPCEGTGEEVKPCSEKRCPAFHEMCRDEYVMLMTWKRAAAGEIIYNKCPPNASGSASRRCLLSAQGVAYWGLPSFARCISHEYRYLYLSLREHLAKGQRMLAGEGMSQVVRSLQELLARRTYYSGDLLFSVDILRNVTDTFKRATYVPSADDVQRFFQVVSFMVDSENKDKWDDAQQVSPGSVHLLRVVEDFIHLVGDALKAFQSSLIVTDNLVISIQREPISAVSSDITFPMRGRRGMKDWVRHSEDRLFLPKEVLSLSSPGKPATPGAATAGSPGRGRGPGTVPPGPGHAHQRLLPADPEESSSYFVIGAVLYRTLGLILPPPRPPLAVTSRVMTVTVRPPTQPPAEPLITVELSYIINGTTDPHCASWDYSRADTNSGDWNTESCQTLETQAAHTRCQCQHLSTFAVLAQPPKDLTLELAGAPSVPLVIGCAVSCMALLTLLAIYAAFWRFIKSERSIILLNFCLSILASNILILVGQSRVLSKGVCTMTAAFLHFFFLSSFCWVLTEAWQSYLAVIGRMRTRLVRKRFLCLGWGLPALVVAVSVGFTRTKGYGTSSYCWLSLEGGLLYAFVGPAAVIVLVNMLIGIIVFNKLMARDGVSDKSKKQRAGSERCPWASLLLPCSACGAVPSPLLSSASARNAMASLWSSCVVLPLLALTWMSAVLAMTDRRSVLFQALFAVFNSAQGFVITAVHCFLRREVQDVVKCQMGVCRADESEDSPDSCKNGQLQILSDFEKDVDLACQTVLFKEVNTCNPSTITGTLSRLSLDEDEEPKSCLVGPEGGLSFSPLPGNILVPMAASPGLGEPPPPQETNPVYMCGEGGLRQLDLTWIRQSEPGSEGDYMVLPRRTLSLQPGGGGTAGEEAPRARPEGTPRRAAKTVAHTEGYPSFLSVEHSGLGLGPAYGSLQNPYGMTFQPPPPTPSARQVPEPGERSRTMPRTVPGSTMKLGSLERKKLRYSDLDFEKVMHTRKRHSELYHELNQKFHTFDRYRSQSSAKEKPSPPGGRPGLSQHRRHQSWSTFKSMTLGSLPPKPRERLALHRTAAWEPTEPPDGDFQTEV.

The N-terminal stretch at 1–20 (MTPACPLLLSVILSLRLATA) is a signal peptide. The Extracellular segment spans residues 21 to 930 (FDPAPSACSA…ELAGAPSVPL (910 aa)). Residues N94, N182, and N183 are each glycosylated (N-linked (GlcNAc...) asparagine). An O-linked (Xyl...) (chondroitin sulfate) serine glycan is attached at S257. 4 TSP type-1 domains span residues 300-353 (DPAA…ATCP), 355-408 (HGVW…AACP), 410-463 (EGQW…LDCP), and 466-519 (DGKW…KRCP). 14 cysteine pairs are disulfide-bonded: C312/C346, C316/C352, C327/C336, C367/C402, C371/C407, C382/C392, C422/C457, C426/C462, C437/C447, C478/C513, C482/C518, C493/C503, C525/C560, and C548/C578. N347 carries an N-linked (GlcNAc...) asparagine glycan. Residue N428 is glycosylated (N-linked (GlcNAc...) asparagine). 2 N-linked (GlcNAc...) asparagine glycosylation sites follow: N551 and N636. In terms of domain architecture, GAIN-B spans 748–918 (DRLFLPKEVL…AVLAQPPKDL (171 aa)). Positions 757-797 (LSLSSPGKPATPGAATAGSPGRGRGPGTVPPGPGHAHQRLL) are disordered. A compositionally biased stretch (low complexity) spans 760-775 (SSPGKPATPGAATAGS). N-linked (GlcNAc...) asparagine glycosylation is present at N861. 2 disulfide bridges follow: C868–C900 and C888–C902. A GPS region spans residues 868-918 (CASWDYSRADTNSGDWNTESCQTLETQAAHTRCQCQHLSTFAVLAQPPKDL). A helical transmembrane segment spans residues 931–951 (VIGCAVSCMALLTLLAIYAAF). Residues 952–959 (WRFIKSER) are Cytoplasmic-facing. Residues 960–980 (SIILLNFCLSILASNILILVG) form a helical membrane-spanning segment. Topologically, residues 981 to 988 (QSRVLSKG) are extracellular. A helical membrane pass occupies residues 989–1009 (VCTMTAAFLHFFFLSSFCWVL). Topologically, residues 1010-1030 (TEAWQSYLAVIGRMRTRLVRK) are cytoplasmic. A helical transmembrane segment spans residues 1031–1051 (RFLCLGWGLPALVVAVSVGFT). Over 1052–1072 (RTKGYGTSSYCWLSLEGGLLY) the chain is Extracellular. Residues 1073 to 1093 (AFVGPAAVIVLVNMLIGIIVF) form a helical membrane-spanning segment. Topologically, residues 1094–1115 (NKLMARDGVSDKSKKQRAGSER) are cytoplasmic. The helical transmembrane segment at 1116-1136 (CPWASLLLPCSACGAVPSPLL) threads the bilayer. Residues 1137-1147 (SSASARNAMAS) lie on the Extracellular side of the membrane. A helical membrane pass occupies residues 1148-1168 (LWSSCVVLPLLALTWMSAVLA). At 1169–1561 (MTDRRSVLFQ…PPDGDFQTEV (393 aa)) the chain is on the cytoplasmic side. Phosphotyrosine is present on Y1345. Disordered stretches follow at residues 1355-1377 (LQPG…GTPR), 1417-1447 (FQPP…PGST), and 1491-1561 (RYRS…QTEV). Positions 1366–1376 (EAPRARPEGTP) are enriched in basic and acidic residues. Residues 1491–1502 (RYRSQSSAKEKP) show a composition bias toward basic and acidic residues. Polar residues predominate over residues 1519–1528 (SWSTFKSMTL). The span at 1551–1561 (EPPDGDFQTEV) shows a compositional bias: acidic residues.

The protein belongs to the G-protein coupled receptor 2 family. Adhesion G-protein coupled receptor (ADGR) subfamily. In terms of assembly, heterodimer of 2 chains generated by proteolytic processing; the large extracellular N-terminal fragment and the membrane-bound C-terminal fragment predominantly remain associated and non-covalently linked. Interacts with GABPB2. Interacts (via carboxy-terminus) with TAX1BP3. Interacts with GNAZ. Interacts with SH3GL2. Post-translationally, glycosylated. In terms of processing, autoproteolytically processed at the GPS region of the GAIN-B domain; this cleavage modulates receptor activity. Additionally, furin is involved in the cleavage at another site, in the middle of the extracellular domain, generating a soluble fragment. Specifically expressed in the brain. The peak level in the brain is observed 10 days after birth.

The protein resides in the cell membrane. It is found in the secreted. With respect to regulation, receptor activity is regulated by proteolytic processing. The long N-terminal has a an inhibitory effect on the constitutive signaling activity. Removal of the N-terminal region induces an increase of the receptor activity. Orphan G-protein coupled receptor involved in cell adhesion and probably in cell-cell interactions. Activates NFAT-signaling pathway, a transcription factor, via the G-protein GNAZ. Involved in angiogenesis inhibition. The protein is Adhesion G protein-coupled receptor B2 (Adgrb2) of Mus musculus (Mouse).